The chain runs to 239 residues: Ribonuclease PH (239 aa).

Residues arginine 86 and 124–126 (GTR) contribute to the phosphate site.

The protein belongs to the RNase PH family. As to quaternary structure, homohexameric ring arranged as a trimer of dimers.

The enzyme catalyses tRNA(n+1) + phosphate = tRNA(n) + a ribonucleoside 5'-diphosphate. Its function is as follows. Phosphorolytic 3'-5' exoribonuclease that plays an important role in tRNA 3'-end maturation. Removes nucleotide residues following the 3'-CCA terminus of tRNAs; can also add nucleotides to the ends of RNA molecules by using nucleoside diphosphates as substrates, but this may not be physiologically important. Probably plays a role in initiation of 16S rRNA degradation (leading to ribosome degradation) during starvation. The polypeptide is Ribonuclease PH (Cupriavidus necator (strain ATCC 17699 / DSM 428 / KCTC 22496 / NCIMB 10442 / H16 / Stanier 337) (Ralstonia eutropha)).